We begin with the raw amino-acid sequence, 160 residues long: Cytochrome b6-f complex subunit 4 (160 aa).

The next 3 helical transmembrane spans lie at 36-56 (LLYI…GLGV), 95-115 (LLGV…PFIE), and 131-151 (LVFL…TMPI).

Belongs to the cytochrome b family. PetD subfamily. The 4 large subunits of the cytochrome b6-f complex are cytochrome b6, subunit IV (17 kDa polypeptide, petD), cytochrome f and the Rieske protein, while the 4 small subunits are petG, petL, petM and petN. The complex functions as a dimer.

The protein resides in the plastid. It is found in the chloroplast thylakoid membrane. Functionally, component of the cytochrome b6-f complex, which mediates electron transfer between photosystem II (PSII) and photosystem I (PSI), cyclic electron flow around PSI, and state transitions. This Emiliania huxleyi (Coccolithophore) protein is Cytochrome b6-f complex subunit 4.